The sequence spans 130 residues: MARQIKKSGARKTKRNAVNGITHIKSTFNNTIVTITNLKGETLSWSSSGASGFKGAKKGTPFAAQTAAEKAARQAMDQGMRQTEVLVNGPGAGRETAIRALQAAGLEITLIKDITPVPHNGCRPPKKRRV.

This sequence belongs to the universal ribosomal protein uS11 family. As to quaternary structure, part of the 30S ribosomal subunit.

It is found in the plastid. Its subcellular location is the chloroplast. This Pyropia yezoensis (Susabi-nori) protein is Small ribosomal subunit protein uS11c.